The primary structure comprises 552 residues: MGNKCCSKRQDQELALAYPTGGYKKSDYTFGQTHINSSGGGNMGGVLGQKHNNGGSLDSRYTPDPNHRGPLKIGGKGGVDIIRPRTTPTGVPGVVLKRVVVALYDYKSRDESDLSFMKGDRMEVIDDTESDWWRVVNLTTRQEGLIPLNFVAEERSVNSEDWFFENVLRKEADKLLLAEENPRGTFLVRPSEHNPNGYSLSVKDWEDGRGYHVKHYRIKPLDNGGYYIATNQTFPSLQALVMAYSKNALGLCHILSRPCPKPQPQMWDLGPELRDKYEIPRSEIQLLRKLGRGNFGEVFYGKWRNSIDVAVKTLREGTMSTAAFLQEAAIMKKFRHNRLVALYAVCSQEEPIYIVQEYMSKGSLLDFLREGDGRYLHFEDLIYIATQVASGMEYLESKQLIHRDLAARNVLIGENNVAKICDFGLARVIADDEYCPKQGSRFPVKWTAPEAIIYGKFSIKSDVWSYGILLMELFTYGQVPYPGMHSREVIENIERGFRMPKPTNHYFPDNIYQLLLQCWDAVPEKRPTFEFLNHYFESFSVTSEVPYREVQD.

One can recognise an SH3 domain in the interval 95–156 (VLKRVVVALY…PLNFVAEERS (62 aa)). The 98-residue stretch at 162–259 (WFFENVLRKE…GLCHILSRPC (98 aa)) folds into the SH2 domain. The 254-residue stretch at 284–537 (IQLLRKLGRG…TFEFLNHYFE (254 aa)) folds into the Protein kinase domain. Residues 290-298 (LGRGNFGEV) and K312 each bind ATP. The active-site Proton acceptor is the D404. Residue Y434 is modified to Phosphotyrosine; by autocatalysis.

It belongs to the protein kinase superfamily. Tyr protein kinase family. SRC subfamily. As to quaternary structure, interacts with hzg. In terms of processing, phosphorylated. In terms of tissue distribution, after the first 8 hours of development, accumulates almost exclusively in neural tissues such as the brain, ventral nerve chord, and eye-antennal disks, and in differentiating smooth muscle.

The enzyme catalyses L-tyrosyl-[protein] + ATP = O-phospho-L-tyrosyl-[protein] + ADP + H(+). Tyrosine-protein kinase that may play a role in the development of neural tissue and smooth muscle. May contribute to tyrosine phosphorylation of Dscam1, a cell surface receptor involved in targeting of growing axons during eye morphogenesis. This is Tyrosine-protein kinase Src64B (Src64B) from Drosophila melanogaster (Fruit fly).